A 398-amino-acid chain; its full sequence is MKDRVVLAYSGGLDTTVAISWIAKERNAEVVCVSIDLGQGGEDMETVRQRALGAGAVESIVVDARDEFANDYCLPTIKANGMYMKEYPLVSAISRPLIVKHMADAAKEHGGTAVAHGCTGKGNDQVRFEVGFANTAPDLEIIAPVRDYAWTREKAIAFAEENGIPIEQSKSSPFSIDQNVWGRAVETGFLEDLWNAPTKDVYAYTEDPGLGQAPDEVIISFESGVPVAIDGKKVTVLEAIEELNRRAGAQGVGRLDMVEDRLVGIKSREIYEAPGAITLIRAHEALEAVTVERELARYKRGIDAEWSNQVYDGLWFSPLKRSLDAFIDSTQAHVTGDIRLVLHAGSITVNGRRSGKSLYDFNLATYDEGDSFDQSMARGFVELHGLSSKIAAKRDLAN.

Residue 8-16 coordinates ATP; it reads AYSGGLDTT. Residue tyrosine 87 coordinates L-citrulline. Glycine 117 is a binding site for ATP. Positions 119, 123, and 124 each coordinate L-aspartate. Asparagine 123 serves as a coordination point for L-citrulline. L-citrulline is bound by residues arginine 127, serine 175, glutamate 259, and tyrosine 271.

Belongs to the argininosuccinate synthase family. Type 1 subfamily. In terms of assembly, homotetramer.

The protein resides in the cytoplasm. The catalysed reaction is L-citrulline + L-aspartate + ATP = 2-(N(omega)-L-arginino)succinate + AMP + diphosphate + H(+). Its pathway is amino-acid biosynthesis; L-arginine biosynthesis; L-arginine from L-ornithine and carbamoyl phosphate: step 2/3. The polypeptide is Argininosuccinate synthase (Corynebacterium jeikeium (strain K411)).